The sequence spans 360 residues: DNA ADP-ribosyl glycohydrolase (360 aa).

The region spanning methionine 1–alanine 155 is the Macro domain. Residues asparagine 8–leucine 9, threonine 20–asparagine 22, valine 31–glutamine 34, and threonine 79 each bind ADP-D-ribose. Lysine 80 (nucleophile) is an active-site residue. Glycine 117–glycine 121 is a binding site for ADP-D-ribose. Positions leucine 167–glycine 338 are interaction with DarT.

The protein belongs to the DarG ADP-ribosyl glycohydrolase family. In terms of assembly, interacts (via C-terminus) with cognate toxin DarT; this heterodimeric complex neutralizes the toxic effect of DarT by preventing ssDNA binding to DarT and consequently inactivating the toxin by direct protein-protein interactions.

It catalyses the reaction an N-(ADP-alpha-D-ribosyl)-thymidine in DNA + H2O = a thymidine in DNA + ADP-D-ribose. Antitoxin component of the hybrid type II/IV toxin-antitoxin (TA) system DarTG, which plays a crucial role in controlling bacterial growth and bacteriophage infection. De-ADP-ribosylates DNA modified on thymidine by its cognate toxin DarT, which neutralizes the activity of cognate toxin DarT. Upon expression in E.coli neutralizes the effect of cognate toxin DarT. Upon expression in M.tuberculosis neutralizes the toxic effects of endogenous DarT. The protein is DNA ADP-ribosyl glycohydrolase of Thermus aquaticus (strain ATCC BAA-2747 / Y51MC23).